Here is a 146-residue protein sequence, read N- to C-terminus: VHWSAEEKQLITGLWGKVDVAEVGGATLGKLLVVFPWTQRFFAHFGNLSSANAIICNPVVKAHGKKVLTSFGEAIKHLDSIKETFAKLSELHCEKLHVDPENFRLLGNILIIVLAGHHGKEFTPSTHAAFQKLVRAVAHSLARVYH.

Residues 2-146 (HWSAEEKQLI…VAHSLARVYH (145 aa)) form the Globin domain. Residues histidine 63 and histidine 92 each contribute to the heme b site.

This sequence belongs to the globin family. As to quaternary structure, heterotetramer of two alpha chains and two beta chains. In terms of tissue distribution, red blood cells.

Involved in oxygen transport from the lung to the various peripheral tissues. This Microcephalophis gracilis (Graceful small-headed sea snake) protein is Hemoglobin subunit beta (HBB).